A 203-amino-acid polypeptide reads, in one-letter code: Small ribosomal subunit protein uS4 (203 aa).

Residues 93–154 form the S4 RNA-binding domain; it reads RRFDNVVFRA…KSKNMDAVTE (62 aa).

The protein belongs to the universal ribosomal protein uS4 family. Part of the 30S ribosomal subunit. Contacts protein S5. The interaction surface between S4 and S5 is involved in control of translational fidelity.

Its function is as follows. One of the primary rRNA binding proteins, it binds directly to 16S rRNA where it nucleates assembly of the body of the 30S subunit. Functionally, with S5 and S12 plays an important role in translational accuracy. This Prosthecochloris aestuarii (strain DSM 271 / SK 413) protein is Small ribosomal subunit protein uS4.